A 408-amino-acid chain; its full sequence is Ribosomal RNA large subunit methyltransferase DR_0049 (408 aa).

Belongs to the methyltransferase superfamily.

It catalyses the reaction cytidine(2499) in 23S rRNA + S-adenosyl-L-methionine = 5-methylcytidine(2499) in 23S rRNA + S-adenosyl-L-homocysteine + H(+). Functionally, specifically methylates the cytosine at position 2499 (m5C2499) of 23S rRNA. The polypeptide is Ribosomal RNA large subunit methyltransferase DR_0049 (Deinococcus radiodurans (strain ATCC 13939 / DSM 20539 / JCM 16871 / CCUG 27074 / LMG 4051 / NBRC 15346 / NCIMB 9279 / VKM B-1422 / R1)).